We begin with the raw amino-acid sequence, 256 residues long: Putative bidirectional sugar transporter SWEET7e (256 aa).

Topologically, residues 1–9 are extracellular; sequence MVSPDLIRN. A helical membrane pass occupies residues 10-30; the sequence is VVGIVGNAISFGLFLSPVLTF. One can recognise a MtN3/slv 1 domain in the interval 10-97; that stretch reads VVGIVGNAIS…TIFFLFSNKK (88 aa). Over 31–45 the chain is Cytoplasmic; that stretch reads WRIIKEKDMKYFKAD. The chain crosses the membrane as a helical span at residues 46–66; sequence PYLATLLNCMLWVFYGLPIVH. Residues 67-69 lie on the Extracellular side of the membrane; the sequence is PNS. Residues 70–90 form a helical membrane-spanning segment; the sequence is ILVVTINGIGLVIEAVYLTIF. The Cytoplasmic segment spans residues 91-100; the sequence is FLFSNKKNKK. A helical membrane pass occupies residues 101 to 121; it reads MGVVLATEALFMAAVALGVLL. The Extracellular portion of the chain corresponds to 122–130; sequence GAHTHQRRS. The chain crosses the membrane as a helical span at residues 131–151; that stretch reads LIVGILCVIFGTIMYSSPLTI. A MtN3/slv 2 domain is found at 133–212; it reads VGILCVIFGT…LMQLILDKNQ (80 aa). The Cytoplasmic portion of the chain corresponds to 152–164; it reads MSQVVKTKSVEYM. The helical transmembrane segment at 165–185 threads the bilayer; that stretch reads PLLLSVVSFLNGLCWTSYALI. A topological domain (extracellular) is located at residue Arg-186. Residues 187–207 traverse the membrane as a helical segment; it reads FDIFITIPNGLGVLFTLMQLI. Residues 208–256 are Cytoplasmic-facing; sequence LDKNQDKNLELPTVAPVAKETSIVTPVSKDDDINGSTASHVIINITKEP.

It belongs to the SWEET sugar transporter family. In terms of assembly, forms homooligomers and/or heterooligomers.

The protein localises to the cell membrane. In terms of biological role, mediates both low-affinity uptake and efflux of sugar across the plasma membrane. The protein is Putative bidirectional sugar transporter SWEET7e (SWEET7E) of Oryza sativa subsp. japonica (Rice).